Here is a 216-residue protein sequence, read N- to C-terminus: Probable transaldolase (216 aa).

Lys-85 (schiff-base intermediate with substrate) is an active-site residue.

This sequence belongs to the transaldolase family. Type 3B subfamily.

The protein resides in the cytoplasm. The catalysed reaction is D-sedoheptulose 7-phosphate + D-glyceraldehyde 3-phosphate = D-erythrose 4-phosphate + beta-D-fructose 6-phosphate. Its pathway is carbohydrate degradation; pentose phosphate pathway; D-glyceraldehyde 3-phosphate and beta-D-fructose 6-phosphate from D-ribose 5-phosphate and D-xylulose 5-phosphate (non-oxidative stage): step 2/3. Its function is as follows. Transaldolase is important for the balance of metabolites in the pentose-phosphate pathway. The polypeptide is Probable transaldolase (Dehalococcoides mccartyi (strain ATCC BAA-2266 / KCTC 15142 / 195) (Dehalococcoides ethenogenes (strain 195))).